Reading from the N-terminus, the 279-residue chain is 4-diphosphocytidyl-2-C-methyl-D-erythritol kinase (279 aa).

The active site involves lysine 9. 92–102 (PLAAGLGGGSS) is a binding site for ATP. Residue aspartate 134 is part of the active site.

Belongs to the GHMP kinase family. IspE subfamily.

The catalysed reaction is 4-CDP-2-C-methyl-D-erythritol + ATP = 4-CDP-2-C-methyl-D-erythritol 2-phosphate + ADP + H(+). It functions in the pathway isoprenoid biosynthesis; isopentenyl diphosphate biosynthesis via DXP pathway; isopentenyl diphosphate from 1-deoxy-D-xylulose 5-phosphate: step 3/6. Functionally, catalyzes the phosphorylation of the position 2 hydroxy group of 4-diphosphocytidyl-2C-methyl-D-erythritol. In Syntrophus aciditrophicus (strain SB), this protein is 4-diphosphocytidyl-2-C-methyl-D-erythritol kinase.